We begin with the raw amino-acid sequence, 336 residues long: Peroxidase 11 (336 aa).

The signal sequence occupies residues 1–20; that stretch reads MMRLLFVFFMVHTIFIPCFS. 4 disulfides stabilise this stretch: Cys-39-Cys-119, Cys-72-Cys-77, Cys-125-Cys-331, and Cys-204-Cys-236. The active-site Proton acceptor is the His-70. 5 residues coordinate Ca(2+): Asp-71, Val-74, Gly-76, Asp-78, and Ser-80. Pro-167 is a substrate binding site. His-197 contributes to the heme b binding site. Position 198 (Thr-198) interacts with Ca(2+). N-linked (GlcNAc...) asparagine glycosylation occurs at Asn-246. Asp-251, Thr-254, and Asp-259 together coordinate Ca(2+).

This sequence belongs to the peroxidase family. Classical plant (class III) peroxidase subfamily. It depends on heme b as a cofactor. Ca(2+) is required as a cofactor. Expressed in roots and stems.

It localises to the secreted. The catalysed reaction is 2 a phenolic donor + H2O2 = 2 a phenolic radical donor + 2 H2O. In terms of biological role, removal of H(2)O(2), oxidation of toxic reductants, biosynthesis and degradation of lignin, suberization, auxin catabolism, response to environmental stresses such as wounding, pathogen attack and oxidative stress. These functions might be dependent on each isozyme/isoform in each plant tissue. The sequence is that of Peroxidase 11 (PER11) from Arabidopsis thaliana (Mouse-ear cress).